An 87-amino-acid polypeptide reads, in one-letter code: Protein ORF3 (87 aa).

The disordered stretch occupies residues 58 to 87 (GALNNAPREPSAPPLSQTLSPRQVLARYQM). Residues 67 to 70 (PSAP) carry the PTAP/PSAP motif motif.

It belongs to the hepevirus ORF3 protein family. Palmitoylated in the N-terminus.

The protein resides in the host endoplasmic reticulum membrane. The protein localises to the host cytoplasm. Its subcellular location is the host cytoskeleton. It is found in the virion. It localises to the host cell membrane. Its function is as follows. Small multifunctional phosphoprotein involved in virion morphogenesis, egress and counteracting host innate immunity. The sequence is that of Protein ORF3 from Avian hepatitis E virus (isolate Chicken/California/Meng) (AHEV).